The sequence spans 188 residues: dCTP deaminase (188 aa).

DCTP-binding positions include 111 to 116 (KSTYAR), 135 to 137 (TLE), Q156, Y170, K179, and Q180. E137 functions as the Proton donor/acceptor in the catalytic mechanism.

Belongs to the dCTP deaminase family. In terms of assembly, homotrimer.

It catalyses the reaction dCTP + H2O + H(+) = dUTP + NH4(+). Its pathway is pyrimidine metabolism; dUMP biosynthesis; dUMP from dCTP (dUTP route): step 1/2. Its function is as follows. Catalyzes the deamination of dCTP to dUTP. The sequence is that of dCTP deaminase from Rickettsia bellii (strain OSU 85-389).